The chain runs to 46 residues: Large ribosomal subunit protein bL36A (46 aa).

This sequence belongs to the bacterial ribosomal protein bL36 family.

This Sodalis glossinidius (strain morsitans) protein is Large ribosomal subunit protein bL36A.